The following is a 303-amino-acid chain: Quinolinate synthase (303 aa).

2 residues coordinate iminosuccinate: His25 and Ser42. Cys87 lines the [4Fe-4S] cluster pocket. Residues 113–115 (YVN) and Ser130 each bind iminosuccinate. Cys173 is a binding site for [4Fe-4S] cluster. Iminosuccinate contacts are provided by residues 199-201 (HPE) and Thr216. Cys261 contacts [4Fe-4S] cluster.

The protein belongs to the quinolinate synthase family. Type 2 subfamily. The cofactor is [4Fe-4S] cluster.

It is found in the cytoplasm. It catalyses the reaction iminosuccinate + dihydroxyacetone phosphate = quinolinate + phosphate + 2 H2O + H(+). The protein operates within cofactor biosynthesis; NAD(+) biosynthesis; quinolinate from iminoaspartate: step 1/1. Functionally, catalyzes the condensation of iminoaspartate with dihydroxyacetone phosphate to form quinolinate. This chain is Quinolinate synthase, found in Desulforudis audaxviator (strain MP104C).